Reading from the N-terminus, the 376-residue chain is Putative glutamate--cysteine ligase 2 (376 aa).

The protein belongs to the glutamate--cysteine ligase type 2 family. YbdK subfamily.

It catalyses the reaction L-cysteine + L-glutamate + ATP = gamma-L-glutamyl-L-cysteine + ADP + phosphate + H(+). Its function is as follows. ATP-dependent carboxylate-amine ligase which exhibits weak glutamate--cysteine ligase activity. The chain is Putative glutamate--cysteine ligase 2 from Mycobacterium bovis (strain ATCC BAA-935 / AF2122/97).